The chain runs to 383 residues: tRNA(Met) cytidine acetate ligase (383 aa).

Residues isoleucine 7–leucine 20, glycine 101, asparagine 153, and arginine 178–isoleucine 179 each bind ATP.

This sequence belongs to the TmcAL family.

Its subcellular location is the cytoplasm. The catalysed reaction is cytidine(34) in elongator tRNA(Met) + acetate + ATP = N(4)-acetylcytidine(34) in elongator tRNA(Met) + AMP + diphosphate. Functionally, catalyzes the formation of N(4)-acetylcytidine (ac(4)C) at the wobble position of elongator tRNA(Met), using acetate and ATP as substrates. First activates an acetate ion to form acetyladenylate (Ac-AMP) and then transfers the acetyl group to tRNA to form ac(4)C34. The sequence is that of tRNA(Met) cytidine acetate ligase from Lactobacillus helveticus (strain DPC 4571).